Reading from the N-terminus, the 375-residue chain is 4,4'-diaponeurosporenoate glycosyltransferase (375 aa).

4 consecutive transmembrane segments (helical) span residues 3-23 (WLSRILTVIVTMSMACGALIF), 164-184 (FYEGFSAIFNLMTVVGMNVFS), 277-297 (IMTAIVLWLFGSIASILGLCL), and 330-350 (FSNLLMVCHPLLFMFFTKIFI).

Belongs to the glycosyltransferase 2 family. CrtQ subfamily.

It is found in the cell membrane. It participates in carotenoid biosynthesis; staphyloxanthin biosynthesis; staphyloxanthin from farnesyl diphosphate: step 4/5. In terms of biological role, catalyzes the glycosylation of 4,4'-diaponeurosporenoate, i.e. the esterification of glucose at the C1'' position with the carboxyl group of 4,4'-diaponeurosporenic acid, to form glycosyl-4,4'-diaponeurosporenoate. This is a step in the biosynthesis of staphyloxanthin, an orange pigment present in most staphylococci strains. This chain is 4,4'-diaponeurosporenoate glycosyltransferase (crtQ), found in Staphylococcus aureus (strain USA300).